Reading from the N-terminus, the 240-residue chain is UDP-2,3-diacylglucosamine hydrolase (240 aa).

Positions 8, 10, 41, 79, and 114 each coordinate Mn(2+). Asn-79–Arg-80 is a substrate binding site. Substrate-binding residues include Asp-122, Ser-160, Asn-164, Lys-167, and His-195. 2 residues coordinate Mn(2+): His-195 and His-197.

Belongs to the LpxH family. Mn(2+) is required as a cofactor.

The protein localises to the cell inner membrane. It catalyses the reaction UDP-2-N,3-O-bis[(3R)-3-hydroxytetradecanoyl]-alpha-D-glucosamine + H2O = 2-N,3-O-bis[(3R)-3-hydroxytetradecanoyl]-alpha-D-glucosaminyl 1-phosphate + UMP + 2 H(+). It functions in the pathway glycolipid biosynthesis; lipid IV(A) biosynthesis; lipid IV(A) from (3R)-3-hydroxytetradecanoyl-[acyl-carrier-protein] and UDP-N-acetyl-alpha-D-glucosamine: step 4/6. In terms of biological role, hydrolyzes the pyrophosphate bond of UDP-2,3-diacylglucosamine to yield 2,3-diacylglucosamine 1-phosphate (lipid X) and UMP by catalyzing the attack of water at the alpha-P atom. Involved in the biosynthesis of lipid A, a phosphorylated glycolipid that anchors the lipopolysaccharide to the outer membrane of the cell. The chain is UDP-2,3-diacylglucosamine hydrolase from Proteus mirabilis (strain HI4320).